Here is a 399-residue protein sequence, read N- to C-terminus: Phosphoglycerate kinase (399 aa).

Substrate is bound by residues 21-23 (DFN), arginine 37, 60-63 (HLGR), arginine 119, and arginine 152. ATP contacts are provided by residues lysine 205, glycine 296, glutamate 327, and 353 to 356 (GGDT).

It belongs to the phosphoglycerate kinase family. In terms of assembly, monomer.

It localises to the cytoplasm. It catalyses the reaction (2R)-3-phosphoglycerate + ATP = (2R)-3-phospho-glyceroyl phosphate + ADP. It participates in carbohydrate degradation; glycolysis; pyruvate from D-glyceraldehyde 3-phosphate: step 2/5. The polypeptide is Phosphoglycerate kinase (Sulfurimonas denitrificans (strain ATCC 33889 / DSM 1251) (Thiomicrospira denitrificans (strain ATCC 33889 / DSM 1251))).